A 120-amino-acid polypeptide reads, in one-letter code: Large ribosomal subunit protein uL18 (120 aa).

It belongs to the universal ribosomal protein uL18 family. In terms of assembly, part of the 50S ribosomal subunit; part of the 5S rRNA/L5/L18 subcomplex. In B.stearothermophilus only 2 proteins, L5 and L18 have been shown to be part of this subcomplex, unlike the case in E.coli and T.thermophilus where L25 (TL5) is also found. The protein, when overexpressed in E.coli, contains a phosphoserine, which is required for the protein to bind to 5S rRNA. It has been suggested, based solely on amino acid conservation, that this occurs on Ser-57.

In terms of biological role, this is one of the proteins that bind and probably mediate the attachment of the 5S RNA into the large ribosomal subunit, where it forms part of the central protuberance. In Geobacillus stearothermophilus (Bacillus stearothermophilus), this protein is Large ribosomal subunit protein uL18 (rplR).